Here is a 239-residue protein sequence, read N- to C-terminus: Ribonuclease 3 (239 aa).

In terms of domain architecture, RNase III spans 11–133; that stretch reads HAAIQKKLGY…MFAAVSFDAD (123 aa). Residue Glu46 participates in Mg(2+) binding. Residue Asp50 is part of the active site. Residues Asp119 and Glu122 each coordinate Mg(2+). Glu122 is an active-site residue. In terms of domain architecture, DRBM spans 160 to 230; it reads DGKTALQEAL…AKEALKWLEE (71 aa).

It belongs to the ribonuclease III family. Homodimer. Mg(2+) serves as cofactor.

Its subcellular location is the cytoplasm. It carries out the reaction Endonucleolytic cleavage to 5'-phosphomonoester.. In terms of biological role, digests double-stranded RNA. Involved in the processing of primary rRNA transcript to yield the immediate precursors to the large and small rRNAs (23S and 16S). Also processes some mRNAs, and tRNAs when they are encoded in the rRNA operon. Its function is as follows. CRISPR (clustered regularly interspaced short palindromic repeat) is an adaptive immune system that provides protection against mobile genetic elements (viruses, transposable elements and conjugative plasmids). CRISPR clusters contain spacers, sequences complementary to antecedent mobile elements, and target invading nucleic acids. CRISPR clusters are transcribed and processed into CRISPR RNA (crRNA). In this organism endogenous ribonuclease 3 and Cas9 are required for correct coprocessing of pre-crRNA and the trans-encoded small RNA (tracrRNA). Cas9, crRNA and tracrRNA are required for cleavage of invading DNA. Complements pre-crRNA and tracrRNA coprocessing defects in an rnc deletion in S.pyogenes strain 370. The sequence is that of Ribonuclease 3 from Neisseria meningitidis serogroup A / serotype 4A (strain DSM 15465 / Z2491).